The sequence spans 370 residues: Putative F-box protein At1g47390 (370 aa).

The 47-residue stretch at 1 to 47 (MAPEEKLPCELIEEILSRVPPESLVRFRTVSKKWNALFDDKMFINNH) folds into the F-box domain.

The protein is Putative F-box protein At1g47390 of Arabidopsis thaliana (Mouse-ear cress).